Reading from the N-terminus, the 315-residue chain is DDRGK domain-containing protein 1 (315 aa).

A helical transmembrane segment spans residues 1 to 28 (MVGPWVYLVAAVLLIGLILFLTRSRGRA). The mediates interaction with CDK5RAP3 stretch occupies residues 1-115 (MVGPWVYLVA…IEKPAEVHPT (115 aa)). Residues 29 to 315 (AAADGEPLHN…GQDLPAQASA (287 aa)) lie on the Cytoplasmic side of the membrane. Residues 30–184 (AADGEPLHNE…ERKAQEEQAR (155 aa)) form a disordered region. Residues 34–43 (EPLHNEEERA) show a composition bias toward basic and acidic residues. Serine 73 carries the phosphoserine modification. Residues 119 to 217 (GAKKLRKLEE…MTEEQSHSFL (99 aa)) are mediates interaction with TRIP4. Over residues 125–184 (KLEEKQARKAQREAEEAEREERKRLESQREAEWKKEEERLRLKEEQKEEEERKAQEEQAR) the composition is skewed to basic and acidic residues. A UFM1-interacting motif (UFIM) motif is present at residues 196 to 210 (AFVVEEEGVSETMTE). The interval 217-315 (LTEFINYIKK…GQDLPAQASA (99 aa)) is mediates interaction with UFL1. The 45-residue stretch at 230-274 (VLLEDLAFQMGLRTQDAINRIQDLLTEGTLTGVIDDRGKFIYITP) folds into the PCI domain. Lysine 268 participates in a covalent cross-link: Glycyl lysine isopeptide (Lys-Gly) (interchain with G-Cter in UFM1).

The protein belongs to the DDRGK1 family. Component of the UFM1 ribosome E3 ligase (UREL) complex, composed of UFL1, DDRGK1 and CDK5RAP3. Interacts with (unphosphorylated) ERN1/IRE1-alpha; interaction is dependent on UFM1 and takes place in response to endoplasmic reticulum stress, regulating ERN1/IRE1-alpha stability. Interacts with NFKBIA. Interacts with SOX9. Ufmylated; conjugated to ubiquitin-like protein UFM1, probably at Lys-268 by UFL1. The relevance of ufmylation is however unclear: as DDRGK1 acts as a substrate adapter for ufmylation, it is uncertain whether ufmylation is a collateral effect of the ufmylation process or whether it is required to regulate its activity. Post-translationally, ubiquitinated. Ubiquitination probably triggers proteasomal degradation and is negatively regulated by UFL1, the enzyme involved in the ufmylation of DDRGK1. As to expression, ubiquitously expressed. Higher expression in pancreatic islets, pancreatic acini and testis (at protein level). Highly expressed in the intestinal exocrine cells.

It is found in the endoplasmic reticulum membrane. In terms of biological role, component of the UFM1 ribosome E3 ligase (UREL) complex, a multiprotein complex that catalyzes ufmylation of endoplasmic reticulum-docked proteins. The UREL complex plays a key role in ribosome recycling by mediating mono-ufmylation of the RPL26/uL24 subunit of the 60S ribosome following ribosome dissociation: ufmylation weakens the junction between post-termination 60S subunits and SEC61 translocons, promoting release and recycling of the large ribosomal subunit from the endoplasmic reticulum membrane. Ufmylation of RPL26/uL24 and subsequent 60S ribosome recycling either take place after normal termination of translation or after ribosome stalling during cotranslational translocation at the endoplasmic reticulum. Within the UREL complex, DDRGK1 tethers the complex to the endoplasmic reticulum membrane to restrict its activity to endoplasmic reticulum-docked ribosomes and acts as an ufmylation 'reader': following RPL26/uL24 ufmylation, DDRGK1 specifically binds to ufmylated RPL26/uL24 via its UFIM motif, resulting in stable association between the 60S ribosome and the UREL complex, followed by dissociation of the 60S ribosome subunit from the endoplasmic reticulum membrane. The UREL complex is also involved in reticulophagy in response to endoplasmic reticulum stress by promoting ufmylation of proteins such as CYB5R3 and RPN1, thereby promoting lysosomal degradation of ufmylated proteins. Ufmylation-dependent reticulophagy inhibits the unfolded protein response (UPR) by regulating ERN1/IRE1-alpha stability. Acts as a regulator of immunity by promoting differentiation of B-cells into plasma cells: acts by promoting expansion of the endoplasmic reticulum and regulating the unfolded protein response (UPR). May also be required for TRIP4 ufmylation. May play a role in NF-kappa-B-mediated transcription through regulation of the phosphorylation and the degradation of NFKBIA, the inhibitor of NF-kappa-B. Plays a role in cartilage development through SOX9, inhibiting the ubiquitin-mediated proteasomal degradation of this transcriptional regulator. Required for stabilization and ufmylation of ATG9A. This Mus musculus (Mouse) protein is DDRGK domain-containing protein 1.